Consider the following 326-residue polypeptide: Tagatose 1,6-diphosphate aldolase 2 (326 aa).

This sequence belongs to the aldolase LacD family.

The catalysed reaction is D-tagatofuranose 1,6-bisphosphate = D-glyceraldehyde 3-phosphate + dihydroxyacetone phosphate. It functions in the pathway carbohydrate metabolism; D-tagatose 6-phosphate degradation; D-glyceraldehyde 3-phosphate and glycerone phosphate from D-tagatose 6-phosphate: step 2/2. The sequence is that of Tagatose 1,6-diphosphate aldolase 2 (lacD2) from Streptococcus agalactiae serotype III (strain NEM316).